The sequence spans 365 residues: 5-hydroxytryptamine receptor 1E (365 aa).

Topologically, residues 1–21 (MNITNCTTEASMAIRPKTITE) are extracellular. N-linked (GlcNAc...) asparagine glycans are attached at residues N2 and N5. Residues 22–45 (KMLICMTLVVITTLTTLLNLAVIM) form a helical membrane-spanning segment. Topologically, residues 46–59 (AIGTTKKLHQPANY) are cytoplasmic. A helical membrane pass occupies residues 60–84 (LICSLAVTDLLVAVLVMPLSIIYIV). The Extracellular portion of the chain corresponds to 85 to 92 (MDRWKLGY). Residues 93–118 (FLCEVWLSVDMTCCTCSILHLCVIAL) form a helical membrane-spanning segment. C95 and C173 are oxidised to a cystine. Residues D102 and C106 each contribute to the serotonin site. Positions 119–121 (DRY) match the DRY motif; important for ligand-induced conformation changes motif. The Cytoplasmic segment spans residues 119–138 (DRYWAITNAIEYARKRTAKR). A helical transmembrane segment spans residues 139–157 (AALMILTVWTISIFISMPP). Residues 158–179 (LFWRSHRRLSPPPSQCTIQHDH) lie on the Extracellular side of the membrane. The chain crosses the membrane as a helical span at residues 180–203 (VIYTIYSTLGAFYIPLTLILILYY). The Cytoplasmic segment spans residues 204–291 (RIYHAAKSLY…SSTRERKAAR (88 aa)). A helical membrane pass occupies residues 292-316 (ILGLILGAFILSWLPFFIKELIVGL). The Extracellular portion of the chain corresponds to 317–322 (SIYTVS). Residues 323 to 345 (SEVADFLTWLGYVNSLINPLLYT) form a helical membrane-spanning segment. The NPxxY motif; important for ligand-induced conformation changes and signaling motif lies at 340 to 344 (NPLLY). Topologically, residues 346–365 (SFNEDFKLAFKKLIRCREHT) are cytoplasmic.

Belongs to the G-protein coupled receptor 1 family. As to expression, detected in brain.

The protein resides in the cell membrane. Its function is as follows. G-protein coupled receptor for 5-hydroxytryptamine (serotonin). Also functions as a receptor for various alkaloids and psychoactive substances. Ligand binding causes a conformation change that triggers signaling via guanine nucleotide-binding proteins (G proteins) and modulates the activity of downstream effectors, such as adenylate cyclase. HTR1E is coupled to G(i)/G(o) G alpha proteins and mediates inhibitory neurotransmission by inhibiting adenylate cyclase activity. The chain is 5-hydroxytryptamine receptor 1E from Homo sapiens (Human).